The chain runs to 377 residues: MRANCSSGLACPANSSEEELPEGLKAFGNLDLVFTVVSALMIGLLMFSLGCSVEVQKLWGHIRRPWGIAVGMLCQFGLMPLIAYLLIISFSLKPLQAIAVLIMGCCPGGTVSNIFTFWVDGDMDLSISMTTCSTMAALGMMPLCLYLYTLSWNLEQNLTIPYQNIGITLVCLIIPVAFGIYVNYRWPKQSKIILKIGAIAGGLLFLVVTGAGMVLMKEFWSSDIILLMISFIFPLIGHATGFLLALLTHQSWQRCRTISLETGTQNVQMCFTMLQLSFTAEQLVQIFGFVLAYGLFQMLNGFFMVAAYKMYKRRLKNKHGNEKPSCQEARHRKKSTSPKETTAFLEVNEEATLSPGPSGPVDPHGAPTPTGDIARAK.

The Extracellular segment spans residues methionine 1–asparagine 29. The N-linked (GlcNAc...) asparagine glycan is linked to asparagine 4. The helical transmembrane segment at leucine 30–glycine 50 threads the bilayer. The Cytoplasmic portion of the chain corresponds to cysteine 51–glycine 67. The chain crosses the membrane as a helical span at residues isoleucine 68–isoleucine 88. The Extracellular portion of the chain corresponds to serine 89–alanine 97. A helical membrane pass occupies residues isoleucine 98–tryptophan 118. At valine 119 to serine 133 the chain is on the cytoplasmic side. A helical transmembrane segment spans residues threonine 134 to leucine 154. The Extracellular portion of the chain corresponds to glutamate 155 to threonine 159. N-linked (GlcNAc...) asparagine glycosylation is present at asparagine 157. The helical transmembrane segment at isoleucine 160–isoleucine 180 threads the bilayer. Residues tyrosine 181–lysine 195 lie on the Cytoplasmic side of the membrane. The chain crosses the membrane as a helical span at residues isoleucine 196–methionine 216. Over lysine 217–aspartate 223 the chain is Extracellular. The helical transmembrane segment at isoleucine 224–leucine 244 threads the bilayer. Residues alanine 245–threonine 257 lie on the Cytoplasmic side of the membrane. Residues isoleucine 258–phenylalanine 278 form a helical membrane-spanning segment. Topologically, residues threonine 279 to glutamine 285 are extracellular. Residues isoleucine 286 to alanine 306 traverse the membrane as a helical segment. The Cytoplasmic portion of the chain corresponds to alanine 307 to lysine 377. The tract at residues histidine 319 to lysine 377 is disordered.

It belongs to the bile acid:sodium symporter (BASS) (TC 2.A.28) family. Glycosylated.

The protein localises to the membrane. It catalyses the reaction estrone 3-sulfate(out) + 2 Na(+)(out) = estrone 3-sulfate(in) + 2 Na(+)(in). It carries out the reaction 17beta-estradiol 3-sulfate(out) + 2 Na(+)(out) = 17beta-estradiol 3-sulfate(in) + 2 Na(+)(in). The catalysed reaction is dehydroepiandrosterone 3-sulfate(out) + 2 Na(+)(out) = dehydroepiandrosterone 3-sulfate(in) + 2 Na(+)(in). The enzyme catalyses androst-5-ene-diol 3-sulfate(out) + 2 Na(+)(out) = androst-5-ene-diol 3-sulfate(in) + 2 Na(+)(in). It catalyses the reaction pregnenolone sulfate(out) + 2 Na(+)(out) = pregnenolone sulfate(in) + 2 Na(+)(in). It carries out the reaction taurolithocholate 3-sulfate(out) + 2 Na(+)(out) = taurolithocholate 3-sulfate(in) + 2 Na(+)(in). The catalysed reaction is androsterone 3alpha-sulfate(out) + 2 Na(+)(out) = androsterone 3alpha-sulfate(in) + 2 Na(+)(in). The enzyme catalyses 5alpha-dihydrotestosterone sulfate(out) + 2 Na(+)(out) = 5alpha-dihydrotestosterone sulfate(in) + 2 Na(+)(in). It catalyses the reaction 17beta-estradiol 17-sulfate(out) + 2 Na(+)(out) = 17beta-estradiol 17-sulfate(in) + 2 Na(+)(in). It carries out the reaction 17alpha-hydroxypregnenolone 3-sulfate(out) + 2 Na(+)(out) = 17alpha-hydroxypregnenolone 3-sulfate(in) + 2 Na(+)(in). The catalysed reaction is epiandrosterone 3-sulfate(out) + 2 Na(+)(out) = epiandrosterone 3-sulfate(in) + 2 Na(+)(in). The enzyme catalyses epitestosterone 17-sulfate(out) + 2 Na(+)(out) = epitestosterone 17-sulfate(in) + 2 Na(+)(in). It catalyses the reaction testosterone 17-sulfate(out) + 2 Na(+)(out) = testosterone 17-sulfate(in) + 2 Na(+)(in). It carries out the reaction 16alpha-hydroxydehydroepiandrosterone 3-sulfate(out) + 2 Na(+)(out) = 16alpha-hydroxydehydroepiandrosterone 3-sulfate(in) + 2 Na(+)(in). Functionally, transports sulfoconjugated steroid hormones from the extracellular compartment into the cytosol in a sodium-dependent manner without hydrolysis. Steroid sulfate hormones are commonly considered to be biologically inactive metabolites, that may be activated by steroid sulfatases into free steroids. May play an important role by delivering sulfoconjugated steroids to specific target cells in reproductive organs. May play a role transporting the estriol precursor 16alpha-hydroxydehydroepiandrosterone 3-sulfate (16a-OH-DHEAS) at the fetal blood vessel endothelium. Can also transport other sulfoconjugated molecules such as taurolithocholic acid-3-sulfate and sulfoconjugated pyrenes. In Bos taurus (Bovine), this protein is Sodium-dependent organic anion transporter (SLC10A6).